A 265-amino-acid chain; its full sequence is Putative methyltransferase 235L (265 aa).

Positions 1-17 (MDICICYFFTILTTISC) are cleaved as a signal peptide.

It belongs to the methyltransferase superfamily.

The polypeptide is Putative methyltransferase 235L (Acheta domesticus (House cricket)).